The following is a 486-amino-acid chain: Malonate-semialdehyde dehydrogenase 1 (486 aa).

Residues phenylalanine 154, lysine 178, glutamate 181, arginine 182, and serine 231 each coordinate NAD(+). Cysteine 286 acts as the Nucleophile in catalysis. Glutamate 386 contacts NAD(+).

Belongs to the aldehyde dehydrogenase family. IolA subfamily. As to quaternary structure, homotetramer.

It catalyses the reaction 3-oxopropanoate + NAD(+) + CoA + H2O = hydrogencarbonate + acetyl-CoA + NADH + H(+). The catalysed reaction is 2-methyl-3-oxopropanoate + NAD(+) + CoA + H2O = propanoyl-CoA + hydrogencarbonate + NADH + H(+). Its pathway is polyol metabolism; myo-inositol degradation into acetyl-CoA; acetyl-CoA from myo-inositol: step 7/7. In terms of biological role, catalyzes the oxidation of malonate semialdehyde (MSA) and methylmalonate semialdehyde (MMSA) into acetyl-CoA and propanoyl-CoA, respectively. Is involved in a myo-inositol catabolic pathway. Bicarbonate, and not CO2, is the end-product of the enzymatic reaction. The chain is Malonate-semialdehyde dehydrogenase 1 from Bacillus anthracis.